The sequence spans 438 residues: sn-glycerol-3-phosphate-binding periplasmic protein UgpB (438 aa).

The N-terminal stretch at 1 to 23 (MKPLRYTASALALGLALMANAQA) is a signal peptide. Residues Y65, E89, S144, S270, G307, Y346, and R397 each contribute to the sn-glycerol 3-phosphate site.

It belongs to the bacterial solute-binding protein 1 family. The complex is composed of two ATP-binding proteins (UgpC), two transmembrane proteins (UgpA and UgpE) and a solute-binding protein (UgpB).

Its subcellular location is the periplasm. Its function is as follows. Part of the ABC transporter complex UgpBAEC involved in sn-glycerol-3-phosphate (G3P) import. Binds G3P. This chain is sn-glycerol-3-phosphate-binding periplasmic protein UgpB (ugpB), found in Escherichia coli O6:K15:H31 (strain 536 / UPEC).